Consider the following 128-residue polypeptide: Aspartate 1-decarboxylase (128 aa).

S25 (schiff-base intermediate with substrate; via pyruvic acid) is an active-site residue. S25 is modified (pyruvic acid (Ser)). T57 provides a ligand contact to substrate. Catalysis depends on Y58, which acts as the Proton donor. 73-75 (GSA) provides a ligand contact to substrate.

It belongs to the PanD family. Heterooctamer of four alpha and four beta subunits. Pyruvate is required as a cofactor. In terms of processing, is synthesized initially as an inactive proenzyme, which is activated by self-cleavage at a specific serine bond to produce a beta-subunit with a hydroxyl group at its C-terminus and an alpha-subunit with a pyruvoyl group at its N-terminus.

The protein localises to the cytoplasm. It catalyses the reaction L-aspartate + H(+) = beta-alanine + CO2. It participates in cofactor biosynthesis; (R)-pantothenate biosynthesis; beta-alanine from L-aspartate: step 1/1. In terms of biological role, catalyzes the pyruvoyl-dependent decarboxylation of aspartate to produce beta-alanine. This chain is Aspartate 1-decarboxylase, found in Paraburkholderia phytofirmans (strain DSM 17436 / LMG 22146 / PsJN) (Burkholderia phytofirmans).